The following is a 230-amino-acid chain: 3,4-dihydroxy-2-butanone 4-phosphate synthase (230 aa).

Residues Arg42 to Glu43, Asp47, Arg155 to Thr159, and Glu179 each bind D-ribulose 5-phosphate. Glu43 contributes to the Mg(2+) binding site. Residue His158 participates in Mg(2+) binding.

This sequence belongs to the DHBP synthase family. Homodimer. Mg(2+) serves as cofactor. It depends on Mn(2+) as a cofactor.

It catalyses the reaction D-ribulose 5-phosphate = (2S)-2-hydroxy-3-oxobutyl phosphate + formate + H(+). Its pathway is cofactor biosynthesis; riboflavin biosynthesis; 2-hydroxy-3-oxobutyl phosphate from D-ribulose 5-phosphate: step 1/1. Functionally, catalyzes the conversion of D-ribulose 5-phosphate to formate and 3,4-dihydroxy-2-butanone 4-phosphate. The sequence is that of 3,4-dihydroxy-2-butanone 4-phosphate synthase from Bordetella pertussis (strain Tohama I / ATCC BAA-589 / NCTC 13251).